Reading from the N-terminus, the 482-residue chain is MSIVVKNNILWVGQRDWEVRDFHGTEYKTLRGSSYNSYLIREEKNVLIDTVDHKFSREFVQNLRREIDLADLDYIVINHAEEDHAGALTELMMQIPDTPIYCTANAIDSINGHHHHPEWNFHVVKTGDTLDIGNGKQLIFVETPMLHWPDSMMTYLTGDAVLFSNDAFGQHYCDEHLFNDEVDQTELYEQCQRYYANILTPFSRLVTPKITEILGFNLPVEMIATSHGVVWRDNPTQIVEKYLEWAADYQEDRITIFYDTMSNNTRMMADAIAQGITEVDPQVAVKIFNVARSDKNDILTNVFRSKGVLVGTSTMNNVMMPKIAGLVEEMTGLRFRNKRASAFGSHGWSGGAVDRLSTRLQDAGFEMSLSLKAKWRPDIDALELCRQHGRDIARQWALSPLPVAEAATTPEPQDCACAAAAAADLGPMMQCSVCQWVYDPAKGEPNQDVQPGTPWSEVPDNFLCPECSLGKDVFDVLATEAK.

The interval 30–210 (LRGSSYNSYL…PFSRLVTPKI (181 aa)) is zinc metallo-hydrolase. The Fe cation site is built by His-79, Glu-81, Asp-83, His-147, Asp-166, and His-227. Positions 254–393 (ITIFYDTMSN…LCRQHGRDIA (140 aa)) constitute a Flavodoxin-like domain. FMN is bound by residues 260–264 (TMSNN) and 342–369 (AFGS…EMSL). Positions 426 to 477 (GPMMQCSVCQWVYDPAKGEPNQDVQPGTPWSEVPDNFLCPECSLGKDVFDVL) constitute a Rubredoxin-like domain. Positions 431, 434, 464, and 467 each coordinate Fe cation.

The protein in the N-terminal section; belongs to the zinc metallo-hydrolase group 3 family. As to quaternary structure, homotetramer. Fe cation serves as cofactor. Requires FMN as cofactor.

The protein localises to the cytoplasm. The protein operates within nitrogen metabolism; nitric oxide reduction. Its function is as follows. Anaerobic nitric oxide reductase; uses NADH to detoxify nitric oxide (NO), protecting several 4Fe-4S NO-sensitive enzymes. Has at least 2 reductase partners, only one of which (NorW, flavorubredoxin reductase) has been identified. NO probably binds to the di-iron center; electrons enter from the NorW at rubredoxin and are transferred sequentially to the FMN center and the di-iron center. Also able to function as an aerobic oxygen reductase. This Klebsiella pneumoniae subsp. pneumoniae (strain ATCC 700721 / MGH 78578) protein is Anaerobic nitric oxide reductase flavorubredoxin.